Consider the following 271-residue polypeptide: MEFWQNIYVNFDVVAFEIFGLKVHWYGIMYVLALLVALMVAKYYAIKDNMGISKAMLDSYFIWVEIGVILGARIGYILIYDAHTLWYLTHPWQIFNPFYNGEFVGIRGMSYHGAVVGFLIATYAFCKKNKQNLWKYLDLVAISVPCGYIFGRIGNFLNQELFGRATEVPWGIYVDGILRHPSQLYEAFLEGFIVFIILLLIKKYKKYNGELIAYYTILYALARFVCEFFREPDFGIGFVAFGMSMGQILSLLMFLLGLFLSFYLRNIKKNL.

7 helical membrane passes run 18-38, 60-80, 103-123, 137-157, 181-201, 209-229, and 236-256; these read IFGL…LVAL, YFIW…ILIY, FVGI…IATY, LDLV…GNFL, PSQL…LLLI, GELI…CEFF, and IGFV…MFLL. Residue arginine 152 coordinates a 1,2-diacyl-sn-glycero-3-phospho-(1'-sn-glycerol).

This sequence belongs to the Lgt family.

Its subcellular location is the cell inner membrane. It carries out the reaction L-cysteinyl-[prolipoprotein] + a 1,2-diacyl-sn-glycero-3-phospho-(1'-sn-glycerol) = an S-1,2-diacyl-sn-glyceryl-L-cysteinyl-[prolipoprotein] + sn-glycerol 1-phosphate + H(+). Its pathway is protein modification; lipoprotein biosynthesis (diacylglyceryl transfer). Catalyzes the transfer of the diacylglyceryl group from phosphatidylglycerol to the sulfhydryl group of the N-terminal cysteine of a prolipoprotein, the first step in the formation of mature lipoproteins. In Campylobacter lari (strain RM2100 / D67 / ATCC BAA-1060), this protein is Phosphatidylglycerol--prolipoprotein diacylglyceryl transferase.